We begin with the raw amino-acid sequence, 295 residues long: Bifunctional protein FolD (295 aa).

Residues 164 to 166 (GRS), Ser193, and Ile234 contribute to the NADP(+) site.

Belongs to the tetrahydrofolate dehydrogenase/cyclohydrolase family. Homodimer.

It carries out the reaction (6R)-5,10-methylene-5,6,7,8-tetrahydrofolate + NADP(+) = (6R)-5,10-methenyltetrahydrofolate + NADPH. The catalysed reaction is (6R)-5,10-methenyltetrahydrofolate + H2O = (6R)-10-formyltetrahydrofolate + H(+). Its pathway is one-carbon metabolism; tetrahydrofolate interconversion. In terms of biological role, catalyzes the oxidation of 5,10-methylenetetrahydrofolate to 5,10-methenyltetrahydrofolate and then the hydrolysis of 5,10-methenyltetrahydrofolate to 10-formyltetrahydrofolate. This chain is Bifunctional protein FolD, found in Flavobacterium johnsoniae (strain ATCC 17061 / DSM 2064 / JCM 8514 / BCRC 14874 / CCUG 350202 / NBRC 14942 / NCIMB 11054 / UW101) (Cytophaga johnsonae).